Here is a 176-residue protein sequence, read N- to C-terminus: Dual specificity phosphatase 28 (176 aa).

Residues 17-159 (PPLVRVAPSL…LQKYEEALQA (143 aa)) form the Tyrosine-protein phosphatase domain. C103 functions as the Phosphocysteine intermediate in the catalytic mechanism.

The protein belongs to the protein-tyrosine phosphatase family. Non-receptor class dual specificity subfamily. As to quaternary structure, monomer.

It catalyses the reaction O-phospho-L-tyrosyl-[protein] + H2O = L-tyrosyl-[protein] + phosphate. The catalysed reaction is O-phospho-L-seryl-[protein] + H2O = L-seryl-[protein] + phosphate. The enzyme catalyses O-phospho-L-threonyl-[protein] + H2O = L-threonyl-[protein] + phosphate. Its function is as follows. Has phosphatase activity with the synthetic substrate 6,8-difluoro-4-methylumbelliferyl phosphate (in vitro). Has almost no detectable activity with phosphotyrosine, even less activity with phosphothreonine and displays complete lack of activity with phosphoserine. The poor activity with phosphotyrosine may be due to steric hindrance by bulky amino acid sidechains that obstruct access to the active site. In Homo sapiens (Human), this protein is Dual specificity phosphatase 28 (DUSP28).